The chain runs to 260 residues: Coiled-coil domain-containing protein 127 (260 aa).

The stretch at 47 to 135 (ESQKEIEKAR…QIIQEKSQRQ (89 aa)) forms a coiled coil.

This Rattus norvegicus (Rat) protein is Coiled-coil domain-containing protein 127 (Ccdc127).